Consider the following 337-residue polypeptide: Ferredoxin--NADP reductase (337 aa).

Residues Asp35, Gln43, Tyr48, Ala88, Phe122, Asp289, and Thr330 each coordinate FAD.

This sequence belongs to the ferredoxin--NADP reductase type 2 family. As to quaternary structure, homodimer. FAD is required as a cofactor.

It catalyses the reaction 2 reduced [2Fe-2S]-[ferredoxin] + NADP(+) + H(+) = 2 oxidized [2Fe-2S]-[ferredoxin] + NADPH. In Ehrlichia ruminantium (strain Gardel), this protein is Ferredoxin--NADP reductase.